The sequence spans 220 residues: Splicing factor U2AF 26 kDa subunit (220 aa).

The residue at position 2 (Ala-2) is an N-acetylalanine. Residues 12–40 form a C3H1-type 1 zinc finger; that stretch reads EKDKVNCSFYFKIGVCRHGDRCSRLHNKP. Residues 65-147 form the RRM domain; the sequence is SHCHVSDVEV…QAVHGELSPV (83 aa). The C3H1-type 2 zinc-finger motif lies at 149–176; that stretch reads DFRESCCRQYEMGECTRGGFCNFMHLRP. A disordered region spans residues 185 to 220; sequence LYGRGPRRRSPPRFHTGHHPRERNHRCSPDHWHGRF. Over residues 189–208 the composition is skewed to basic residues; it reads GPRRRSPPRFHTGHHPRERN. Basic and acidic residues predominate over residues 209-220; the sequence is HRCSPDHWHGRF.

This sequence belongs to the splicing factor SR family. Interacts with GFI1, U2AF2 and C1QBP. Isoform 2 is widely expressed. Isoform 3 is highly expressed in heart, brain and lung, lower expressed in thymus and much lower expressed in peripheral blood leukocytes.

The protein resides in the nucleus. It is found in the nucleus speckle. Its subcellular location is the cytoplasm. Functionally, RNA-binding protein that function as a pre-mRNA splicing factor. Plays a critical role in both constitutive and enhancer-dependent splicing by mediating protein-protein interactions and protein-RNA interactions required for accurate 3'-splice site selection. Acts by enhancing the binding of U2AF2 to weak pyrimidine tracts. Also participates in the regulation of alternative pre-mRNA splicing. Activates exon 5 skipping of PTPRC during T-cell activation; an event reversed by GFI1. Binds to RNA at the AG dinucleotide at the 3'-splice site. Shows a preference for AGC or AGA. The protein is Splicing factor U2AF 26 kDa subunit (U2AF1L4) of Homo sapiens (Human).